A 330-amino-acid chain; its full sequence is Probable cytosolic iron-sulfur protein assembly protein 1 (330 aa).

WD repeat units lie at residues 12 to 49, 56 to 95, 105 to 144, 151 to 190, 195 to 236, 248 to 286, and 292 to 330; these read LYKE…FTLI, AHKK…DRTF, GHEN…EEYE, EHSQ…WECV, GHEG…EDDQ, VHKR…WKVF, and CHGV…EKAA.

This sequence belongs to the WD repeat CIA1 family. As to quaternary structure, interacts with NAR1.

It localises to the cytoplasm. The protein resides in the nucleus. Its function is as follows. Essential component of the cytosolic iron-sulfur (Fe/S) protein assembly machinery. Required for the maturation of extramitochondrial Fe/S proteins. This is Probable cytosolic iron-sulfur protein assembly protein 1 from Saccharomyces cerevisiae (strain YJM789) (Baker's yeast).